The following is a 287-amino-acid chain: Pyridoxal kinase PdxY (287 aa).

Substrate-binding positions include Ser-10 and 45 to 46 (TQ). ATP contacts are provided by residues Asp-112, Ala-144, Glu-149, Lys-182, and 209-212 (RPLV). Asp-224 serves as a coordination point for substrate.

The protein belongs to the pyridoxine kinase family. PdxY subfamily. In terms of assembly, homodimer. It depends on Mg(2+) as a cofactor.

The catalysed reaction is pyridoxal + ATP = pyridoxal 5'-phosphate + ADP + H(+). Its pathway is cofactor metabolism; pyridoxal 5'-phosphate salvage; pyridoxal 5'-phosphate from pyridoxal: step 1/1. Its function is as follows. Pyridoxal kinase involved in the salvage pathway of pyridoxal 5'-phosphate (PLP). Catalyzes the phosphorylation of pyridoxal to PLP. In Shigella boydii serotype 4 (strain Sb227), this protein is Pyridoxal kinase PdxY.